The chain runs to 423 residues: Maltooligosaccharide ABC transporter solute-binding lipoprotein (423 aa).

The signal sequence occupies residues 1-24 (MSSKFMKSTAVLGTVTLASLLLVA). Cys-25 carries N-palmitoyl cysteine lipidation. Cys-25 is lipidated: S-diacylglycerol cysteine. Residues Tyr-52, Asp-77, Asp-83, 103–104 (DR), Glu-148, Asp-193, Asn-196, 251–254 (EGAG), Trp-274, and Lys-307 each bind substrate.

The protein belongs to the bacterial solute-binding protein 1 family.

The protein resides in the cell membrane. Functionally, part of an ABC transporter complex involved in the uptake of maltodextrins. Binds glycogen-derived linear maltooligosaccharides increasing in size from maltotriose to maltooctaose with the highest affinity for maltotriose. Has a very weak affinity for maltose. Has also a very low affinity for maltotetraitol, indicating that the binding is selective for maltooligosaccharides with an intact reducing end. The protein is Maltooligosaccharide ABC transporter solute-binding lipoprotein (malX) of Streptococcus pneumoniae (strain ATCC BAA-255 / R6).